The chain runs to 611 residues: Leukotriene A-4 hydrolase (611 aa).

Position 73 is an N6-acetyllysine (lysine 73). A peptide-binding positions include 135–137 (QCQ) and 267–272 (PYGGME). Histidine 296 contacts Zn(2+). Catalysis depends on glutamate 297, which acts as the Proton acceptor. Residues histidine 300 and glutamate 319 each coordinate Zn(2+). The residue at position 337 (lysine 337) is an N6-acetyllysine. The active-site Proton donor is tyrosine 384. An N6-acetyllysine modification is found at lysine 414. A Phosphoserine modification is found at serine 416. 564–566 (RMK) is a binding site for a peptide. At lysine 573 the chain carries N6-acetyllysine.

It belongs to the peptidase M1 family. Monomer. It depends on Zn(2+) as a cofactor. Phosphorylation at Ser-416 inhibits leukotriene-A4 hydrolase activity.

The protein resides in the cytoplasm. The enzyme catalyses leukotriene A4 + H2O = leukotriene B4. The catalysed reaction is (5S,6S)-epoxy-(18R)-hydroxy-(7E,9E,11Z,14Z,16E)-eicosapentaenoate + H2O = resolvin E1. It carries out the reaction (5S,6S)-epoxy-(18S)-hydroxy-(7E,9E,11Z,14Z,16E)-eicosapentaenoate + H2O = 18S-resolvin E1. It catalyses the reaction Release of the N-terminal residue from a tripeptide.. It participates in lipid metabolism; leukotriene B4 biosynthesis. Inhibited by bestatin. Inhibited by captopril. The epoxide hydrolase activity is restrained by suicide inactivation that involves binding of LTA4 to Tyr-379. 4-(4-benzylphenyl)thiazol-2-amine (ARM1) selectively inhibits the epoxide hydrolase activity. Its function is as follows. Bifunctional zinc metalloenzyme that comprises both epoxide hydrolase (EH) and aminopeptidase activities. Acts as an epoxide hydrolase to catalyze the conversion of LTA4 to the pro-inflammatory mediator leukotriene B4 (LTB4). Also has aminopeptidase activity, with high affinity for N-terminal arginines of various synthetic tripeptides. In addition to its pro-inflammatory EH activity, may also counteract inflammation by its aminopeptidase activity, which inactivates by cleavage another neutrophil attractant, the tripeptide Pro-Gly-Pro (PGP), a bioactive fragment of collagen generated by the action of matrix metalloproteinase-9 (MMP9) and prolylendopeptidase (PREPL). Involved also in the biosynthesis of resolvin E1 and 18S-resolvin E1 from eicosapentaenoic acid, two lipid mediators that show potent anti-inflammatory and pro-resolving actions. The chain is Leukotriene A-4 hydrolase (Lta4h) from Rattus norvegicus (Rat).